Reading from the N-terminus, the 163-residue chain is Regulatory protein RecX (163 aa).

Residues 1–21 (MSDAEDIPTGRKRRPREQTPV) form a disordered region.

It belongs to the RecX family.

It is found in the cytoplasm. In terms of biological role, modulates RecA activity. This Stenotrophomonas maltophilia (strain R551-3) protein is Regulatory protein RecX.